We begin with the raw amino-acid sequence, 611 residues long: uncharacterized protein (611 aa).

An SAC domain is found at 51–351; that stretch reads LYGFIRLKIY…DYHKQGSRNL (301 aa).

This sequence to yeast RSD1 and S.pombe SpBC19F5.03.

This is an uncharacterized protein from Schizosaccharomyces pombe (strain 972 / ATCC 24843) (Fission yeast).